Here is a 25-residue protein sequence, read N- to C-terminus: Aurein-5.2 (25 aa).

As to expression, expressed by the skin dorsal glands.

It is found in the secreted. Functionally, has antimicrobial activity against L.lactis and S.uberis. The polypeptide is Aurein-5.2 (Ranoidea raniformis (Southern bell frog)).